The sequence spans 338 residues: Sesquiterpene synthase 1 (338 aa).

The Mg(2+) site is built by Asp-93, Asn-228, Ser-232, and Glu-236. Positions 93 to 97 (DNISD) match the DDXXD motif motif. An NSE/DTE motif motif is present at residues 228–236 (NDIFSYNVE). Residues Arg-316 and Tyr-317 each coordinate (2E,6E)-farnesyl diphosphate.

This sequence belongs to the terpene synthase family. The cofactor is Mg(2+).

The catalysed reaction is (2E,6E)-farnesyl diphosphate = alpha-copaene + diphosphate. It carries out the reaction (2E,6E)-farnesyl diphosphate = beta-copaene + diphosphate. The enzyme catalyses (2E,6E)-farnesyl diphosphate = alpha-muurolene + diphosphate. It catalyses the reaction (2E,6E)-farnesyl diphosphate = gamma-muurolene + diphosphate. The catalysed reaction is (2E,6E)-farnesyl diphosphate = delta-cadinene + diphosphate. Functionally, terpene cyclase that catalyzes the cyclization of farnesyl diphosphate (FPP) to various sesquiterpenes, including alpha-copaene, beta-copaene, beta-elemene, alpha-muurolene, gamma-muurolene and delta-cadinene. This Postia placenta (strain ATCC 44394 / Madison 698-R) (Brown rot fungus) protein is Sesquiterpene synthase 1.